The chain runs to 103 residues: Phosphoribosyl-ATP pyrophosphatase (103 aa).

The disordered stretch occupies residues 79–103 (SVQAELERREGKLSTTRDRKEIDEL). A compositionally biased stretch (basic and acidic residues) spans 83–103 (ELERREGKLSTTRDRKEIDEL).

The protein belongs to the PRA-PH family.

Its subcellular location is the cytoplasm. It catalyses the reaction 1-(5-phospho-beta-D-ribosyl)-ATP + H2O = 1-(5-phospho-beta-D-ribosyl)-5'-AMP + diphosphate + H(+). It participates in amino-acid biosynthesis; L-histidine biosynthesis; L-histidine from 5-phospho-alpha-D-ribose 1-diphosphate: step 2/9. The polypeptide is Phosphoribosyl-ATP pyrophosphatase (Listeria welshimeri serovar 6b (strain ATCC 35897 / DSM 20650 / CCUG 15529 / CIP 8149 / NCTC 11857 / SLCC 5334 / V8)).